Reading from the N-terminus, the 744-residue chain is Eukaryotic translation initiation factor 3 subunit B (744 aa).

The disordered stretch occupies residues 1 to 21; sequence MAPSFDHLPDPEEDEYDEEEL. Positions 11–21 are enriched in acidic residues; the sequence is PEEDEYDEEEL. One can recognise an RRM domain in the interval 40–126; that stretch reads TFVVIDGLPE…HTLRVNKLTD (87 aa). 4 WD repeats span residues 193 to 232, 234 to 290, 307 to 348, and 577 to 622; these read DRQH…RQKR, AHPF…PLRS, PIKR…LLDK, and ADHY…LREE.

This sequence belongs to the eIF-3 subunit B family. In terms of assembly, component of the eukaryotic translation initiation factor 3 (eIF-3) complex.

It is found in the cytoplasm. In terms of biological role, RNA-binding component of the eukaryotic translation initiation factor 3 (eIF-3) complex, which is involved in protein synthesis of a specialized repertoire of mRNAs and, together with other initiation factors, stimulates binding of mRNA and methionyl-tRNAi to the 40S ribosome. The eIF-3 complex specifically targets and initiates translation of a subset of mRNAs involved in cell proliferation. This chain is Eukaryotic translation initiation factor 3 subunit B (prt1), found in Botryotinia fuckeliana (strain B05.10) (Noble rot fungus).